A 223-amino-acid chain; its full sequence is Probable transaldolase (223 aa).

Catalysis depends on Lys-83, which acts as the Schiff-base intermediate with substrate.

The protein belongs to the transaldolase family. Type 3B subfamily.

Its subcellular location is the cytoplasm. The catalysed reaction is D-sedoheptulose 7-phosphate + D-glyceraldehyde 3-phosphate = D-erythrose 4-phosphate + beta-D-fructose 6-phosphate. The protein operates within carbohydrate degradation; pentose phosphate pathway; D-glyceraldehyde 3-phosphate and beta-D-fructose 6-phosphate from D-ribose 5-phosphate and D-xylulose 5-phosphate (non-oxidative stage): step 2/3. Transaldolase is important for the balance of metabolites in the pentose-phosphate pathway. In Myxococcus xanthus (strain DK1622), this protein is Probable transaldolase.